Reading from the N-terminus, the 110-residue chain is ATP synthase subunit c (110 aa).

3 helical membrane-spanning segments follow: residues 4–24, 37–57, and 81–101; these read FFVI…VFAA, ATAG…AGMG, and FIVG…FVLI.

Belongs to the ATPase C chain family. F-type ATPases have 2 components, F(1) - the catalytic core - and F(0) - the membrane proton channel. F(1) has five subunits: alpha(3), beta(3), gamma(1), delta(1), epsilon(1). F(0) has three main subunits: a(1), b(2) and c(10-14). The alpha and beta chains form an alternating ring which encloses part of the gamma chain. F(1) is attached to F(0) by a central stalk formed by the gamma and epsilon chains, while a peripheral stalk is formed by the delta and b chains.

The protein localises to the cell inner membrane. Its function is as follows. F(1)F(0) ATP synthase produces ATP from ADP in the presence of a proton or sodium gradient. F-type ATPases consist of two structural domains, F(1) containing the extramembraneous catalytic core and F(0) containing the membrane proton channel, linked together by a central stalk and a peripheral stalk. During catalysis, ATP synthesis in the catalytic domain of F(1) is coupled via a rotary mechanism of the central stalk subunits to proton translocation. In terms of biological role, key component of the F(0) channel; it plays a direct role in translocation across the membrane. A homomeric c-ring of between 10-14 subunits forms the central stalk rotor element with the F(1) delta and epsilon subunits. The polypeptide is ATP synthase subunit c (Thermodesulfovibrio yellowstonii (strain ATCC 51303 / DSM 11347 / YP87)).